The sequence spans 119 residues: Beta-2-microglobulin (119 aa).

Residues M1–A20 form the signal peptide. The region spanning P25–K114 is the Ig-like C1-type domain. The cysteines at positions 45 and 100 are disulfide-linked.

It belongs to the beta-2-microglobulin family. In terms of assembly, heterodimer of an alpha chain and a beta chain. Beta-2-microglobulin is the beta-chain of major histocompatibility complex class I molecules.

It is found in the secreted. Component of the class I major histocompatibility complex (MHC). Involved in the presentation of peptide antigens to the immune system. The polypeptide is Beta-2-microglobulin (B2M) (Leontocebus fuscicollis (Brown-mantled tamarin)).